The primary structure comprises 276 residues: uncharacterized protein (276 aa).

Residues 1–20 (MMSDEQHQGGDGQTTTNTNT) form a disordered region.

This is an uncharacterized protein from Dictyostelium discoideum (Social amoeba).